Reading from the N-terminus, the 505-residue chain is Lysine--tRNA ligase (505 aa).

The Mg(2+) site is built by E415 and E422.

The protein belongs to the class-II aminoacyl-tRNA synthetase family. In terms of assembly, homodimer. Requires Mg(2+) as cofactor.

The protein resides in the cytoplasm. The catalysed reaction is tRNA(Lys) + L-lysine + ATP = L-lysyl-tRNA(Lys) + AMP + diphosphate. This is Lysine--tRNA ligase from Citrobacter koseri (strain ATCC BAA-895 / CDC 4225-83 / SGSC4696).